Reading from the N-terminus, the 20-residue chain is Short cationic peptide-3a (20 aa).

Glu20 is modified (glutamic acid 1-amide).

Expressed by the venom gland.

It localises to the secreted. This Cupiennius salei (American wandering spider) protein is Short cationic peptide-3a.